Here is a 391-residue protein sequence, read N- to C-terminus: S-adenosylmethionine synthase (391 aa).

His-14 is a binding site for ATP. Asp-16 is a Mg(2+) binding site. Glu-42 provides a ligand contact to K(+). The L-methionine site is built by Glu-55 and Gln-98. Positions 98–108 (QSVDIAMGVDE) are flexible loop. Residues 172–174 (DGK), 238–239 (RF), Asp-247, 253–254 (RK), Ala-270, and Lys-274 contribute to the ATP site. Asp-247 serves as a coordination point for L-methionine. Residue Lys-278 participates in L-methionine binding.

It belongs to the AdoMet synthase family. In terms of assembly, homotetramer; dimer of dimers. Requires Mg(2+) as cofactor. It depends on K(+) as a cofactor.

The protein resides in the cytoplasm. It carries out the reaction L-methionine + ATP + H2O = S-adenosyl-L-methionine + phosphate + diphosphate. Its pathway is amino-acid biosynthesis; S-adenosyl-L-methionine biosynthesis; S-adenosyl-L-methionine from L-methionine: step 1/1. In terms of biological role, catalyzes the formation of S-adenosylmethionine (AdoMet) from methionine and ATP. The overall synthetic reaction is composed of two sequential steps, AdoMet formation and the subsequent tripolyphosphate hydrolysis which occurs prior to release of AdoMet from the enzyme. This is S-adenosylmethionine synthase from Clostridium botulinum (strain Langeland / NCTC 10281 / Type F).